A 617-amino-acid polypeptide reads, in one-letter code: UvrABC system protein C (617 aa).

The region spanning 22 to 100 (KLPGVYRFFD…IKALSPKYNI (79 aa)) is the GIY-YIG domain. Residues 209–244 (DELTRTLQHKMQTAAANLQFEEAARYRDQIQALGIM) form the UVR domain.

It belongs to the UvrC family. As to quaternary structure, interacts with UvrB in an incision complex.

The protein resides in the cytoplasm. Its function is as follows. The UvrABC repair system catalyzes the recognition and processing of DNA lesions. UvrC both incises the 5' and 3' sides of the lesion. The N-terminal half is responsible for the 3' incision and the C-terminal half is responsible for the 5' incision. The chain is UvrABC system protein C from Neisseria meningitidis serogroup A / serotype 4A (strain DSM 15465 / Z2491).